We begin with the raw amino-acid sequence, 45 residues long: Osteocalcin 1 (45 aa).

The Gla domain maps to 1 to 41 (AAGQLSLTQLESLREVCELNLACEHMMDTEGIIAAYTAYYG). Ca(2+)-binding residues include Glu11, Glu15, Glu18, and Glu24. 3 positions are modified to 4-carboxyglutamate: Glu11, Glu15, and Glu18. Cys17 and Cys23 are disulfide-bonded.

Belongs to the osteocalcin/matrix Gla protein family. In terms of processing, gamma-carboxyglutamate residues are formed by vitamin K dependent carboxylation by GGCX. These residues are essential for the binding of calcium.

It localises to the secreted. In terms of biological role, the carboxylated form is one of the main organic components of the bone matrix, which constitutes 1-2% of the total bone protein. The carboxylated form binds strongly to apatite and calcium. In Diplodus sargus (White seabream), this protein is Osteocalcin 1.